The chain runs to 691 residues: Pentatricopeptide repeat-containing protein ATP4, chloroplastic (691 aa).

Residues M1–W17 show a composition bias toward low complexity. The N-terminal 35 residues, M1 to V35, are a transit peptide targeting the chloroplast. Positions M1–N76 are disordered. The segment covering A24–S33 has biased composition (polar residues). Residues P45–D56 show a composition bias toward pro residues. Over residues G61–N76 the composition is skewed to polar residues. PPR repeat units follow at residues K163–P197, D198–P232, D233–L267, D268–P302, N303–P337, S338–I372, D373–S403, D411–P445, N446–P480, and K546–A580. In terms of domain architecture, Smr spans L592–K677.

Belongs to the PPR family. P subfamily.

Its subcellular location is the plastid. The protein localises to the chloroplast stroma. In terms of biological role, involved in translation and accumulation of chloroplast ATP synthase subunits. Interacts with the 5'-UTR of the chloroplast bicistronic atpB and atpE mRNA and activates its translation by facilitating ribosome association with the mRNA. Required for accumulation and activity of the chloroplast ATP synthase. Enhances atpA translation and is required for accumulation of specific processed atpF and psaJ transcripts. Required for the stabilization of bicistronic rpl16 and rpl14 mRNAs. The chain is Pentatricopeptide repeat-containing protein ATP4, chloroplastic from Zea mays (Maize).